Here is a 155-residue protein sequence, read N- to C-terminus: Putative pre-16S rRNA nuclease (155 aa).

Belongs to the YqgF nuclease family.

The protein localises to the cytoplasm. In terms of biological role, could be a nuclease involved in processing of the 5'-end of pre-16S rRNA. In Xanthomonas campestris pv. campestris (strain B100), this protein is Putative pre-16S rRNA nuclease.